A 1857-amino-acid chain; its full sequence is Fer-1-like protein 6 (1857 aa).

The Cytoplasmic portion of the chain corresponds to 1-1824; sequence MFGLKVKKKR…YLIWKNYKKY (1824 aa). The disordered stretch occupies residues 15 to 63; it reads KGLILANKAAKDSQGDTEALQEEPSHQEGPRGDLVHDDASIFPVPSASP. Residues 37-53 are compositionally biased toward basic and acidic residues; it reads EPSHQEGPRGDLVHDDA. 2 consecutive C2 domains span residues 65–181 and 225–356; these read RRSK…QFCN and PIEK…DKGF. Residues 426–447 show a composition bias toward basic and acidic residues; it reads SKDKDSKSSKGKDKADKTEDGK. Positions 426–469 are disordered; sequence SKDKDSKSSKGKDKADKTEDGKSQQASNKTNSTEVEVESFDVPP. A compositionally biased stretch (polar residues) spans 448 to 459; the sequence is SQQASNKTNSTE. 2 consecutive C2 domains span residues 810–937 and 969–1099; these read GTNH…RLCY and PVEP…LAPI. 4 residues coordinate Ca(2+): D842, D848, D904, and D906. Disordered regions lie at residues 1101–1148, 1161–1203, and 1224–1246; these read QVDG…VVPD, PDSS…RTIA, and AQKA…PDEV. The segment covering 1113 to 1129 has biased composition (polar residues); sequence DSLTATESSGAHSSSQD. Over residues 1178 to 1189 the composition is skewed to basic and acidic residues; the sequence is PPKDGKPKDPRK. A compositionally biased stretch (basic residues) spans 1190-1200; it reads PSRRSTKRRKR. The span at 1226-1245 shows a compositional bias: basic and acidic residues; the sequence is KAKERNPKGKKGNTEAKPDE. C2 domains lie at 1338-1457 and 1578-1729; these read DSGQ…AICG and DMPQ…KACD. The Ca(2+) site is built by D1372, D1378, D1427, D1429, and D1435. A helical membrane pass occupies residues 1825–1845; that stretch reads IIIAFILIILIIFLVLFIYTL. Topologically, residues 1846–1857 are extracellular; that stretch reads PGAISRRIVVGS.

Belongs to the ferlin family. Ca(2+) is required as a cofactor.

Its subcellular location is the membrane. In Homo sapiens (Human), this protein is Fer-1-like protein 6 (FER1L6).